The sequence spans 298 residues: O-glycoside alpha-1,2-mannosyltransferase homolog 6 (298 aa).

Glu-220 acts as the Nucleophile in catalysis.

It belongs to the glycosyltransferase 15 family.

Its subcellular location is the cytoplasm. It localises to the nucleus. Its function is as follows. Probable mannosyltransferase involved in O-glycosylation of cell wall and secreted proteins. This Schizosaccharomyces pombe (strain 972 / ATCC 24843) (Fission yeast) protein is O-glycoside alpha-1,2-mannosyltransferase homolog 6 (omh6).